The following is a 230-amino-acid chain: Magnesium-protoporphyrin O-methyltransferase (230 aa).

The protein belongs to the class I-like SAM-binding methyltransferase superfamily. Magnesium protoporphyrin O-methyltransferase family.

The catalysed reaction is Mg-protoporphyrin IX + S-adenosyl-L-methionine = Mg-protoporphyrin IX 13-monomethyl ester + S-adenosyl-L-homocysteine. It participates in porphyrin-containing compound metabolism; chlorophyll biosynthesis (light-independent). Converts Mg-protoporphyrin IX to Mg-protoporphyrin IX methylester using S-adenosyl-L-methionine as a cofactor. This chain is Magnesium-protoporphyrin O-methyltransferase (chlM), found in Synechocystis sp. (strain ATCC 27184 / PCC 6803 / Kazusa).